The sequence spans 300 residues: Pantoate kinase (300 aa).

It belongs to the GHMP kinase family. PoK subfamily. Homodimer.

It catalyses the reaction (R)-pantoate + ATP = (R)-4-phosphopantoate + ADP + H(+). Its pathway is cofactor biosynthesis; coenzyme A biosynthesis. Moderately stimulated in the presence of potassium cations. Inhibited by increasing concentrations of pantoate. Activity is not affected by CoA/acetyl-CoA. In terms of biological role, phosphorylates (R)-pantoate to form (R)-4-phosphopantoate in the CoA biosynthesis pathway. Displays broad nucleotide specificity and utilizes ATP, GTP, UTP, and CTP with comparable catalytic efficiencies. The chain is Pantoate kinase from Thermococcus kodakarensis (strain ATCC BAA-918 / JCM 12380 / KOD1) (Pyrococcus kodakaraensis (strain KOD1)).